The following is a 198-amino-acid chain: MQYPEPISKLIDSFMKLPGIGPKTAVRLAFFVLGMKEDTVLDFAKALVNAKRNLTYCSICGHITDQDPCYICEDTRRDKSVICVVQDPKDVIAMEKMKEYNGQYHVLHGAISPMDGIGPEDIKIPELLKRLQDDQVTEVILATNPNIEGEATAMYISRLLKPSGIKLSRIAHGLPVGGDLEYADEVTLSKALEGRREL.

Residues 57 to 72 form a C4-type zinc finger; sequence CSICGHITDQDPCYIC. One can recognise a Toprim domain in the interval 80–175; it reads SVICVVQDPK…KLSRIAHGLP (96 aa).

Belongs to the RecR family.

Functionally, may play a role in DNA repair. It seems to be involved in an RecBC-independent recombinational process of DNA repair. It may act with RecF and RecO. This is Recombination protein RecR from Bacillus velezensis (strain DSM 23117 / BGSC 10A6 / LMG 26770 / FZB42) (Bacillus amyloliquefaciens subsp. plantarum).